The chain runs to 432 residues: Peptidase B (432 aa).

Residues K196 and D201 each coordinate Mn(2+). Residue K208 is part of the active site. The Mn(2+) site is built by D219, D278, and E280. The active site involves R282.

Belongs to the peptidase M17 family. Homohexamer. The cofactor is Mn(2+).

The protein localises to the cytoplasm. It carries out the reaction Release of an N-terminal amino acid, Xaa, from a peptide or arylamide. Xaa is preferably Glu or Asp but may be other amino acids, including Leu, Met, His, Cys and Gln.. Probably plays an important role in intracellular peptide degradation. This chain is Peptidase B, found in Vibrio vulnificus (strain CMCP6).